We begin with the raw amino-acid sequence, 305 residues long: MTLPGINKAVLIAGPTASGKSALALELAQKAGGAVINTDSMQVYRDLRVLTARPSLAEEAAVPHRLYGCVDAAVNYSAGHYVRDAKEVLDEVRRGGGLPIFIGGTGLYFKALTRGLSAVPPVPDEVREAVRLRLDRDGVEALHAELARRDAAAAARLNVRDRTRIARALEVIEATGRPLAEWHAETTPPLLPEGSYRALFIAPEREALYARIDARFDAMLADGALEEVARLAARGLDPLLPAMKAHGVPALIRHLRGEITREEAAMIGKADTRHYAKRQFTWFRHQLPEFDWLTPEQARGWVAFL.

ATP is bound at residue 14 to 21 (GPTASGKS). Residue 16–21 (TASGKS) coordinates substrate. An interaction with substrate tRNA region spans residues 39–42 (DSMQ).

It belongs to the IPP transferase family. As to quaternary structure, monomer. It depends on Mg(2+) as a cofactor.

It carries out the reaction adenosine(37) in tRNA + dimethylallyl diphosphate = N(6)-dimethylallyladenosine(37) in tRNA + diphosphate. Catalyzes the transfer of a dimethylallyl group onto the adenine at position 37 in tRNAs that read codons beginning with uridine, leading to the formation of N6-(dimethylallyl)adenosine (i(6)A). This Bradyrhizobium sp. (strain BTAi1 / ATCC BAA-1182) protein is tRNA dimethylallyltransferase.